The chain runs to 597 residues: Sodium/mannose cotransporter SLC5A10 (597 aa).

The Extracellular portion of the chain corresponds to 1 to 16 (MVADNSTSDPHAPGPQ). N-linked (GlcNAc...) asparagine glycosylation occurs at Asn5. The helical transmembrane segment at 17-37 (LSVTDIVVITVYFALNVAVGI) threads the bilayer. At 38–73 (WSSCRASRNTVSGYFLAGRDMTWWPIGASLFGSSEG) the chain is on the cytoplasmic side. Phosphoserine is present on Ser49. Residues 74 to 94 (SGLFIGLAGSGAAGGLAVAGF) form a helical membrane-spanning segment. The Extracellular segment spans residues 95–100 (DWNATY). Residues 101–121 (VLLALAWVFGAIYISSEIVTL) traverse the membrane as a helical segment. At 122–137 (AEYIQKRFGGQRIRMY) the chain is on the cytoplasmic side. A helical membrane pass occupies residues 138–158 (LSVLSLLLSVFTKISLDLYAG). The Extracellular portion of the chain corresponds to 159–171 (ALFVHICLGWNFY). Residues 172–194 (LSTILTLTITALYTITGGLVAVI) form a helical membrane-spanning segment. At 195–200 (YTDALQ) the chain is on the cytoplasmic side. Residues 201–219 (TLIMVVGAVILAIKAFHQI) form a helical membrane-spanning segment. Residues 220–265 (DGYGQMEAAYARAIPSRTVANTTCHLPRADAMHMFRDPYTGDLPWT) are Extracellular-facing. The chain crosses the membrane as a helical span at residues 266–286 (GMTFGLTIMATWYWCTDQVIV). Topologically, residues 287–301 (QRSLSARNLNHAKAG) are cytoplasmic. A helical membrane pass occupies residues 302 to 322 (SILASYLKMLPMGLMIMPGMI). Topologically, residues 323–367 (SRALFPDEVGCVVPSECLRACGAEIGCSNIAYPKLVMELMPVGLR) are extracellular. The helical transmembrane segment at 368 to 390 (GLMIAVMMPALMSSLSSIFNSSS) threads the bilayer. Residues 391 to 410 (TLFTMDIWRRLRPCASEREL) lie on the Cytoplasmic side of the membrane. A helical membrane pass occupies residues 411 to 431 (LLVGRLVIVVLIGVSVAWIPV). Topologically, residues 432 to 444 (LQGSNGGQLFIYM) are extracellular. The chain crosses the membrane as a helical span at residues 445–465 (QSVTSSLAPPVTAVFTLGIFW). Residues 466 to 472 (QRANEQG) are Cytoplasmic-facing. The chain crosses the membrane as a helical span at residues 473 to 493 (AFWGLLAGLAVGATRLVLEFL). The Extracellular segment spans residues 494 to 514 (HPAPPCGAADTRPAVLSQLHY). A helical membrane pass occupies residues 515-535 (LHFAVALFVLTGAVAVGGSLL). Over 536-576 (TPPPRRHQIENLTWWTLTRDLSLGAKAGDGQTPQRYTFWAR) the chain is Cytoplasmic. A helical transmembrane segment spans residues 577-597 (VCGFNAILLMCVNIFFYAYFA).

Belongs to the sodium:solute symporter (SSF) (TC 2.A.21) family. As to expression, expressed only in kidney.

The protein resides in the apical cell membrane. It carries out the reaction D-mannose(out) + Na(+)(out) = D-mannose(in) + Na(+)(in). It catalyses the reaction D-fructopyranose(out) + Na(+)(out) = D-fructopyranose(in) + Na(+)(in). In terms of biological role, electrogenic Na+-coupled sugar symporter that actively transports D-mannose or D-fructose at the plasma membrane, with a Na+ to sugar coupling ratio of 1:1. Transporter activity is driven by a transmembrane Na+ electrochemical gradient set by the Na+/K+ pump. Exclusively recognizes sugar substrates having a pyranose ring with an axial hydroxyl group on carbon 2. Has likely evolved to enable renal reabsorption of D-mannose, an important constituent of oligosaccharide chains of glycoproteins. Contributes to dietary D-fructose reabsorption from glomerular filtrate across the brush border of the kidney. The sequence is that of Sodium/mannose cotransporter SLC5A10 (SLC5A10) from Oryctolagus cuniculus (Rabbit).